Reading from the N-terminus, the 163-residue chain is Ribosome maturation factor RimP (163 aa).

Residues 66–85 (ALDRDDPVPGPPYELEVSSP) are disordered.

It belongs to the RimP family.

Its subcellular location is the cytoplasm. Its function is as follows. Required for maturation of 30S ribosomal subunits. This chain is Ribosome maturation factor RimP, found in Kocuria rhizophila (strain ATCC 9341 / DSM 348 / NBRC 103217 / DC2201).